We begin with the raw amino-acid sequence, 194 residues long: Peptidyl-tRNA hydrolase (194 aa).

Tyrosine 16 serves as a coordination point for tRNA. Histidine 21 acts as the Proton acceptor in catalysis. Positions 67, 69, and 115 each coordinate tRNA.

This sequence belongs to the PTH family. In terms of assembly, monomer.

The protein resides in the cytoplasm. It catalyses the reaction an N-acyl-L-alpha-aminoacyl-tRNA + H2O = an N-acyl-L-amino acid + a tRNA + H(+). Hydrolyzes ribosome-free peptidyl-tRNAs (with 1 or more amino acids incorporated), which drop off the ribosome during protein synthesis, or as a result of ribosome stalling. Its function is as follows. Catalyzes the release of premature peptidyl moieties from peptidyl-tRNA molecules trapped in stalled 50S ribosomal subunits, and thus maintains levels of free tRNAs and 50S ribosomes. The chain is Peptidyl-tRNA hydrolase from Shigella dysenteriae serotype 1 (strain Sd197).